Here is a 732-residue protein sequence, read N- to C-terminus: Catalase-peroxidase (732 aa).

The disordered stretch occupies residues 1 to 26 (MADNKKSPETGGITMQIPGKGRTNRD). A cross-link (tryptophyl-tyrosyl-methioninium (Trp-Tyr) (with M-245)) is located at residues 96–219 (WHSAGTYRTF…LAAVQMGLIY (124 aa)). His97 serves as the catalytic Proton acceptor. Residues 219-245 (YVNPEGPDGNPDPVAAARDIREVFARM) constitute a cross-link (tryptophyl-tyrosyl-methioninium (Tyr-Met) (with W-96)). His260 serves as a coordination point for heme b. The segment at 344 to 365 (KPKGEAGAGTVPDPHDPKKRHA) is disordered.

This sequence belongs to the peroxidase family. Peroxidase/catalase subfamily. In terms of assembly, homodimer or homotetramer. Heme b is required as a cofactor. Formation of the three residue Trp-Tyr-Met cross-link is important for the catalase, but not the peroxidase activity of the enzyme.

The enzyme catalyses H2O2 + AH2 = A + 2 H2O. The catalysed reaction is 2 H2O2 = O2 + 2 H2O. Functionally, bifunctional enzyme with both catalase and broad-spectrum peroxidase activity. This is Catalase-peroxidase from Methanospirillum hungatei JF-1 (strain ATCC 27890 / DSM 864 / NBRC 100397 / JF-1).